Consider the following 652-residue polypeptide: Aspartate--tRNA ligase, mitochondrial (652 aa).

A mitochondrion-targeting transit peptide spans 1 to 46; it reads MYLGSWLNRLGRGLSRPIGKTKQPIWGSLSRSLTLSSQRVPEFSSF. Thr218 is subject to Phosphothreonine. Phosphoserine is present on Ser241. The aspartate stretch occupies residues 243–246; it reads QQFK. Arg265 provides a ligand contact to L-aspartate. Residues 265–267 and Glu534 each bind ATP; that span reads RDE. Arg541 contributes to the L-aspartate binding site. Residue 583 to 586 participates in ATP binding; it reads GLDR.

Belongs to the class-II aminoacyl-tRNA synthetase family. Type 1 subfamily. Homodimer.

It localises to the mitochondrion matrix. The protein resides in the mitochondrion membrane. It catalyses the reaction tRNA(Asp) + L-aspartate + ATP = L-aspartyl-tRNA(Asp) + AMP + diphosphate. Catalyzes the attachment of aspartate to tRNA(Asp) in a two-step reaction: aspartate is first activated by ATP to form Asp-AMP and then transferred to the acceptor end of tRNA(Asp). In Rattus norvegicus (Rat), this protein is Aspartate--tRNA ligase, mitochondrial (Dars2).